A 183-amino-acid polypeptide reads, in one-letter code: Ribosome-recycling factor (183 aa).

The protein belongs to the RRF family.

It is found in the cytoplasm. Functionally, responsible for the release of ribosomes from messenger RNA at the termination of protein biosynthesis. May increase the efficiency of translation by recycling ribosomes from one round of translation to another. The chain is Ribosome-recycling factor from Buchnera aphidicola subsp. Baizongia pistaciae (strain Bp).